A 491-amino-acid chain; its full sequence is Aspartyl/glutamyl-tRNA(Asn/Gln) amidotransferase subunit B (491 aa).

Belongs to the GatB/GatE family. GatB subfamily. As to quaternary structure, heterotrimer of A, B and C subunits.

It carries out the reaction L-glutamyl-tRNA(Gln) + L-glutamine + ATP + H2O = L-glutaminyl-tRNA(Gln) + L-glutamate + ADP + phosphate + H(+). The catalysed reaction is L-aspartyl-tRNA(Asn) + L-glutamine + ATP + H2O = L-asparaginyl-tRNA(Asn) + L-glutamate + ADP + phosphate + 2 H(+). Allows the formation of correctly charged Asn-tRNA(Asn) or Gln-tRNA(Gln) through the transamidation of misacylated Asp-tRNA(Asn) or Glu-tRNA(Gln) in organisms which lack either or both of asparaginyl-tRNA or glutaminyl-tRNA synthetases. The reaction takes place in the presence of glutamine and ATP through an activated phospho-Asp-tRNA(Asn) or phospho-Glu-tRNA(Gln). The sequence is that of Aspartyl/glutamyl-tRNA(Asn/Gln) amidotransferase subunit B from Paraburkholderia phymatum (strain DSM 17167 / CIP 108236 / LMG 21445 / STM815) (Burkholderia phymatum).